The sequence spans 119 residues: Non-structural protein 3b (119 aa).

The DRBM domain occupies 2–83 (DYVSLLNQFW…ARLICEQLQA (82 aa)).

In terms of assembly, interacts with host RUNX1 isoform b.

The protein resides in the host nucleus. The protein localises to the host nucleolus. It localises to the host mitochondrion. Its function is as follows. Induces host cell G0/G1 arrest and apoptosis. The sequence is that of Non-structural protein 3b from Tylonycteris pachypus (Lesser bamboo bat).